We begin with the raw amino-acid sequence, 348 residues long: NADH-quinone oxidoreductase subunit H (348 aa).

The next 8 helical transmembrane spans lie at 25-45, 95-115, 128-148, 168-188, 204-224, 254-274, 287-307, and 327-347; these read ILFL…VAAL, FMFI…FAII, IGIL…MFGG, ISYE…TGSF, WNIF…VAVT, FFIG…CLFF, ILPP…MFVL, and VCLP…LISA.

Belongs to the complex I subunit 1 family. As to quaternary structure, NDH-1 is composed of 14 different subunits. Subunits NuoA, H, J, K, L, M, N constitute the membrane sector of the complex.

The protein localises to the cell inner membrane. It catalyses the reaction a quinone + NADH + 5 H(+)(in) = a quinol + NAD(+) + 4 H(+)(out). In terms of biological role, NDH-1 shuttles electrons from NADH, via FMN and iron-sulfur (Fe-S) centers, to quinones in the respiratory chain. The immediate electron acceptor for the enzyme in this species is believed to be ubiquinone. Couples the redox reaction to proton translocation (for every two electrons transferred, four hydrogen ions are translocated across the cytoplasmic membrane), and thus conserves the redox energy in a proton gradient. This subunit may bind ubiquinone. The sequence is that of NADH-quinone oxidoreductase subunit H from Psychrobacter sp. (strain PRwf-1).